The chain runs to 249 residues: Mediator of RNA polymerase II transcription subunit 19 (249 aa).

2 disordered regions span residues 1–68 (MEGF…SSRR) and 178–249 (QPPK…SGLR). A compositionally biased stretch (low complexity) spans 9 to 18 (AASEPSSIPS). The span at 45-56 (VPGPPLPIPPPL) shows a compositional bias: pro residues. 2 stretches are compositionally biased toward basic residues: residues 179 to 190 (PPKKKNKKHKQS) and 221 to 233 (RRKKKDKKKKKSR).

The protein belongs to the Mediator complex subunit 19 family. In terms of assembly, component of the Mediator complex.

Its subcellular location is the nucleus. Its function is as follows. Component of the Mediator complex, a coactivator involved in the regulated transcription of nearly all RNA polymerase II-dependent genes. Mediator functions as a bridge to convey information from gene-specific regulatory proteins to the basal RNA polymerase II transcription machinery. Mediator is recruited to promoters by direct interactions with regulatory proteins and serves as a scaffold for the assembly of a functional preinitiation complex with RNA polymerase II and the general transcription factors. In Xenopus tropicalis (Western clawed frog), this protein is Mediator of RNA polymerase II transcription subunit 19 (med19).